Consider the following 91-residue polypeptide: Late embryogenesis abundant protein EMB564 (91 aa).

Composition is skewed to basic and acidic residues over residues 1-19 and 32-51; these read MASG…REGE and EAQE…RREQ. The disordered stretch occupies residues 1–91; it reads MASGQESRKE…VTIDESKFTK (91 aa).

Belongs to the small hydrophilic plant seed protein family.

In terms of biological role, LEA proteins are late embryonic proteins abundant in higher plant seed embryos. They may play an essential role in seed survival and in controlling water exchanges during seed desiccation and imbibition. This is Late embryogenesis abundant protein EMB564 from Zea mays (Maize).